We begin with the raw amino-acid sequence, 254 residues long: Large ribosomal subunit protein uL4 (254 aa).

Belongs to the universal ribosomal protein uL4 family. In terms of assembly, part of the 50S ribosomal subunit.

Functionally, one of the primary rRNA binding proteins, this protein initially binds near the 5'-end of the 23S rRNA. It is important during the early stages of 50S assembly. It makes multiple contacts with different domains of the 23S rRNA in the assembled 50S subunit and ribosome. Forms part of the polypeptide exit tunnel. The protein is Large ribosomal subunit protein uL4 of Methanothermobacter thermautotrophicus (strain ATCC 29096 / DSM 1053 / JCM 10044 / NBRC 100330 / Delta H) (Methanobacterium thermoautotrophicum).